A 312-amino-acid chain; its full sequence is Pantothenate kinase (312 aa).

Residue 97–104 (GSVAVGKS) participates in ATP binding.

It belongs to the prokaryotic pantothenate kinase family.

The protein localises to the cytoplasm. It catalyses the reaction (R)-pantothenate + ATP = (R)-4'-phosphopantothenate + ADP + H(+). The protein operates within cofactor biosynthesis; coenzyme A biosynthesis; CoA from (R)-pantothenate: step 1/5. The protein is Pantothenate kinase of Mycolicibacterium smegmatis (strain ATCC 700084 / mc(2)155) (Mycobacterium smegmatis).